We begin with the raw amino-acid sequence, 244 residues long: MNDPFARMETRGPQGAANPMDSSRSLGDLGPFPREVGRGAPLAPGARNPATAGASRSQGGGHEDRTADRALGPRAGEELDRESWVREKVLFLLHPERWLGTRGDPAREEVAGAEDLPHAGGEDHGEEPNYPSVFQRQKRISGRRVAPPRDAADPPKYVLVRVEDYQVTQEVLQTSWAKGRMTTRTEEHFVTALTFRSSREGQPGERWGPAESRALQARTGASRVHAAGRRVSPSPGTWLEEIKL.

Basic and acidic residues-rich tracts occupy residues 1–10 (MNDPFARMET) and 100–127 (GTRGDPAREEVAGAEDLPHAGGEDHGEE). Disordered stretches follow at residues 1–79 (MNDP…GEEL), 100–130 (GTRGDPAREEVAGAEDLPHAGGEDHGEEPNY), and 219–244 (TGASRVHAAGRRVSPSPGTWLEEIKL).

This is an uncharacterized protein from Homo sapiens (Human).